The chain runs to 312 residues: DNA-directed RNA polymerase subunit alpha (312 aa).

The alpha N-terminal domain (alpha-NTD) stretch occupies residues 1 to 229 (MLQYQIDRVD…ALFQPLATVT (229 aa)). Residues 241–312 (SAESQIPLEE…ISLPQSRTTA (72 aa)) form an alpha C-terminal domain (alpha-CTD) region.

This sequence belongs to the RNA polymerase alpha chain family. In terms of assembly, in cyanobacteria the RNAP catalytic core is composed of 2 alpha, 1 beta, 1 beta', 1 gamma and 1 omega subunit. When a sigma factor is associated with the core the holoenzyme is formed, which can initiate transcription.

The catalysed reaction is RNA(n) + a ribonucleoside 5'-triphosphate = RNA(n+1) + diphosphate. Functionally, DNA-dependent RNA polymerase catalyzes the transcription of DNA into RNA using the four ribonucleoside triphosphates as substrates. The sequence is that of DNA-directed RNA polymerase subunit alpha from Synechococcus sp. (strain RCC307).